We begin with the raw amino-acid sequence, 546 residues long: CTP synthase (546 aa).

The interval 1–267 (MTKFIFVTGG…AEQVLDILQL (267 aa)) is amidoligase domain. S13 contacts CTP. Residue S13 participates in UTP binding. 14–19 (SIGKGI) provides a ligand contact to ATP. Residue Y54 participates in L-glutamine binding. Residue D71 participates in ATP binding. 2 residues coordinate Mg(2+): D71 and E141. CTP-binding positions include 148 to 150 (DIE), 188 to 193 (KTKPTQ), and K224. Residues 188 to 193 (KTKPTQ) and K224 each bind UTP. One can recognise a Glutamine amidotransferase type-1 domain in the interval 292–534 (EVAIVGKYVR…IKAALGSDLT (243 aa)). G354 contributes to the L-glutamine binding site. The Nucleophile; for glutamine hydrolysis role is filled by C381. L-glutamine contacts are provided by residues 382-385 (LGMQ), E405, and R462. Residues H507 and E509 contribute to the active site.

Belongs to the CTP synthase family. Homotetramer.

It catalyses the reaction UTP + L-glutamine + ATP + H2O = CTP + L-glutamate + ADP + phosphate + 2 H(+). The enzyme catalyses L-glutamine + H2O = L-glutamate + NH4(+). It carries out the reaction UTP + NH4(+) + ATP = CTP + ADP + phosphate + 2 H(+). It participates in pyrimidine metabolism; CTP biosynthesis via de novo pathway; CTP from UDP: step 2/2. Allosterically activated by GTP, when glutamine is the substrate; GTP has no effect on the reaction when ammonia is the substrate. The allosteric effector GTP functions by stabilizing the protein conformation that binds the tetrahedral intermediate(s) formed during glutamine hydrolysis. Inhibited by the product CTP, via allosteric rather than competitive inhibition. Catalyzes the ATP-dependent amination of UTP to CTP with either L-glutamine or ammonia as the source of nitrogen. Regulates intracellular CTP levels through interactions with the four ribonucleotide triphosphates. This is CTP synthase from Synechococcus sp. (strain ATCC 27144 / PCC 6301 / SAUG 1402/1) (Anacystis nidulans).